We begin with the raw amino-acid sequence, 256 residues long: Pimeloyl-[acyl-carrier protein] methyl ester esterase (256 aa).

The AB hydrolase-1 domain maps to histidine 15–proline 242. Residues tryptophan 22, serine 82–leucine 83, and phenylalanine 143–glutamine 147 each bind substrate. Serine 82 functions as the Nucleophile in the catalytic mechanism. Residues aspartate 207 and histidine 235 contribute to the active site. Histidine 235 contributes to the substrate binding site.

The protein belongs to the AB hydrolase superfamily. Carboxylesterase BioH family. In terms of assembly, monomer.

It is found in the cytoplasm. It catalyses the reaction 6-carboxyhexanoyl-[ACP] methyl ester + H2O = 6-carboxyhexanoyl-[ACP] + methanol + H(+). It participates in cofactor biosynthesis; biotin biosynthesis. The physiological role of BioH is to remove the methyl group introduced by BioC when the pimeloyl moiety is complete. It allows to synthesize pimeloyl-ACP via the fatty acid synthetic pathway through the hydrolysis of the ester bonds of pimeloyl-ACP esters. The polypeptide is Pimeloyl-[acyl-carrier protein] methyl ester esterase (Citrobacter koseri (strain ATCC BAA-895 / CDC 4225-83 / SGSC4696)).